A 341-amino-acid polypeptide reads, in one-letter code: Holliday junction branch migration complex subunit RuvB (341 aa).

The interval 4-185 (TDRLIVPTAV…FGIVARLEFY (182 aa)) is large ATPase domain (RuvB-L). ATP is bound by residues L24, R25, G66, K69, T70, T71, 132–134 (EDF), R175, Y185, and R222. T70 is a binding site for Mg(2+). The segment at 186–256 (SAEELGYIVH…VADAALVMLD (71 aa)) is small ATPAse domain (RuvB-S). The tract at residues 259–341 (RAGLDVMDRK…ATPASDAELF (83 aa)) is head domain (RuvB-H). The DNA site is built by R295, R314, and R319.

Belongs to the RuvB family. As to quaternary structure, homohexamer. Forms an RuvA(8)-RuvB(12)-Holliday junction (HJ) complex. HJ DNA is sandwiched between 2 RuvA tetramers; dsDNA enters through RuvA and exits via RuvB. An RuvB hexamer assembles on each DNA strand where it exits the tetramer. Each RuvB hexamer is contacted by two RuvA subunits (via domain III) on 2 adjacent RuvB subunits; this complex drives branch migration. In the full resolvosome a probable DNA-RuvA(4)-RuvB(12)-RuvC(2) complex forms which resolves the HJ.

The protein localises to the cytoplasm. It carries out the reaction ATP + H2O = ADP + phosphate + H(+). In terms of biological role, the RuvA-RuvB-RuvC complex processes Holliday junction (HJ) DNA during genetic recombination and DNA repair, while the RuvA-RuvB complex plays an important role in the rescue of blocked DNA replication forks via replication fork reversal (RFR). RuvA specifically binds to HJ cruciform DNA, conferring on it an open structure. The RuvB hexamer acts as an ATP-dependent pump, pulling dsDNA into and through the RuvAB complex. RuvB forms 2 homohexamers on either side of HJ DNA bound by 1 or 2 RuvA tetramers; 4 subunits per hexamer contact DNA at a time. Coordinated motions by a converter formed by DNA-disengaged RuvB subunits stimulates ATP hydrolysis and nucleotide exchange. Immobilization of the converter enables RuvB to convert the ATP-contained energy into a lever motion, pulling 2 nucleotides of DNA out of the RuvA tetramer per ATP hydrolyzed, thus driving DNA branch migration. The RuvB motors rotate together with the DNA substrate, which together with the progressing nucleotide cycle form the mechanistic basis for DNA recombination by continuous HJ branch migration. Branch migration allows RuvC to scan DNA until it finds its consensus sequence, where it cleaves and resolves cruciform DNA. This chain is Holliday junction branch migration complex subunit RuvB, found in Thiobacillus denitrificans (strain ATCC 25259 / T1).